The sequence spans 394 residues: Elongation factor Tu (394 aa).

The 195-residue stretch at 10-204 folds into the tr-type G domain; it reads KPHVNIGTIG…AVDSWIPLPE (195 aa). Residues 19–26 form a G1 region; it reads GHVDHGKT. GTP is bound at residue 19–26; that stretch reads GHVDHGKT. A Mg(2+)-binding site is contributed by Thr-26. The tract at residues 60-64 is G2; sequence GITIN. The tract at residues 81-84 is G3; it reads DCPG. GTP is bound by residues 81–85 and 136–139; these read DCPGH and NKCD. The interval 136 to 139 is G4; sequence NKCD. Positions 174–176 are G5; that stretch reads SGL.

It belongs to the TRAFAC class translation factor GTPase superfamily. Classic translation factor GTPase family. EF-Tu/EF-1A subfamily. Monomer.

The protein localises to the cytoplasm. It carries out the reaction GTP + H2O = GDP + phosphate + H(+). Its function is as follows. GTP hydrolase that promotes the GTP-dependent binding of aminoacyl-tRNA to the A-site of ribosomes during protein biosynthesis. The chain is Elongation factor Tu from Ureaplasma parvum serovar 3 (strain ATCC 27815 / 27 / NCTC 11736).